The primary structure comprises 86 residues: Neurotoxin 8-related gene product 1/2/3 (86 aa).

An N-terminal signal peptide occupies residues 1-19 (MNYLTMISLALLVMTGVES). Residues 22 to 84 (RDAYIADNKN…VPIKVPGKCN (63 aa)) enclose the LCN-type CS-alpha/beta domain. 4 disulfide bridges follow: cysteine 32/cysteine 83, cysteine 36/cysteine 56, cysteine 42/cysteine 66, and cysteine 46/cysteine 68. Position 84 is an asparagine amide (asparagine 84).

This sequence belongs to the long (4 C-C) scorpion toxin superfamily. Sodium channel inhibitor family. Alpha subfamily. In terms of tissue distribution, expressed by the venom gland.

Its subcellular location is the secreted. Binds voltage-dependently at site-3 of sodium channels (Nav) and inhibits the inactivation of the activated channels, thereby blocking neuronal transmission. This Androctonus mauritanicus mauritanicus (Scorpion) protein is Neurotoxin 8-related gene product 1/2/3 (NTVIIIrgp1).